We begin with the raw amino-acid sequence, 140 residues long: Transmembrane protein 107 (140 aa).

2 helical membrane-spanning segments follow: residues 7–27 (LVPS…TLFW) and 53–73 (LVAA…GFLS). A glycan (N-linked (GlcNAc...) asparagine) is linked at Asn79. The next 2 membrane-spanning stretches (helical) occupy residues 83-103 (SLLS…FIFE) and 113-133 (IFAF…IAVF).

As to quaternary structure, part of the tectonic-like complex (also named B9 complex). Interacts with TMEM237, TMEM231, MKS1 and TMEM216.

The protein localises to the membrane. It localises to the cell projection. Its subcellular location is the cilium. In terms of biological role, plays a role in cilia formation and embryonic patterning. Requires for normal Sonic hedgehog (Shh) signaling in the neural tube and acts in combination with GLI2 and GLI3 to pattern ventral and intermediate neuronal cell types. During ciliogenesis regulates the ciliary transition zone localization of some MKS complex proteins. The polypeptide is Transmembrane protein 107 (Rattus norvegicus (Rat)).